Consider the following 464-residue polypeptide: Argininosuccinate lyase (464 aa).

N-acetylalanine is present on Ala-2. An N6-acetyllysine modification is found at Lys-7. A 2-(N(omega)-L-arginino)succinate-binding site is contributed by Ser-27. Lys-69 carries the post-translational modification N6-acetyllysine. Residues Asn-114 and Thr-159 each contribute to the 2-(N(omega)-L-arginino)succinate site. His-160 (proton acceptor) is an active-site residue. Catalysis depends on Ser-281, which acts as the Proton donor. N6-acetyllysine is present on Lys-288. Residues Asn-289, Tyr-321, Gln-326, and Lys-329 each coordinate 2-(N(omega)-L-arginino)succinate.

It belongs to the lyase 1 family. Argininosuccinate lyase subfamily. In terms of assembly, homotetramer. Forms tissue-specific complexes with ASS1, SLC7A1, HSP90AA1 and nitric oxide synthase NOS1, NOS2 or NOS3; the complex maintenance is independent of ASL catalytic function. In terms of processing, acetylation modifies enzyme activity in response to alterations of extracellular nutrient availability. Acetylation increased with trichostin A (TSA) or with nicotinamide (NAM). Glucose increases acetylation by about a factor of 3 with decreasing enzyme activity. Acetylation on Lys-288 is decreased on the addition of extra amino acids resulting in activation of enzyme activity. As to expression, expressed in lung and brain (at protein level).

It catalyses the reaction 2-(N(omega)-L-arginino)succinate = fumarate + L-arginine. It functions in the pathway amino-acid biosynthesis; L-arginine biosynthesis; L-arginine from L-ornithine and carbamoyl phosphate: step 3/3. It participates in nitrogen metabolism; urea cycle; L-arginine and fumarate from (N(omega)-L-arginino)succinate: step 1/1. Enzyme activity is regulated by acetylation. Its function is as follows. Catalyzes the reversible cleavage of L-argininosuccinate to fumarate and L-arginine, an intermediate step reaction in the urea cycle mostly providing for hepatic nitrogen detoxification into excretable urea as well as de novo L-arginine synthesis in nonhepatic tissues. Essential regulator of intracellular and extracellular L-arginine pools. As part of citrulline-nitric oxide cycle, forms tissue-specific multiprotein complexes with argininosuccinate synthase ASS1, transport protein SLC7A1 and nitric oxide synthase NOS1, NOS2 or NOS3, allowing for cell-autonomous L-arginine synthesis while channeling extracellular L-arginine to nitric oxide synthesis pathway. In Mus musculus (Mouse), this protein is Argininosuccinate lyase (Asl).